Consider the following 183-residue polypeptide: Mid1-interacting protein 1 (183 aa).

M1 is modified (N-acetylmethionine). Residues S75 and S79 each carry the phosphoserine modification.

The protein belongs to the SPOT14 family. As to quaternary structure, homodimer in the absence of THRSP. Heterodimer with THRSP. The homodimer interacts with ACACA and ACACB. Promotes polymerization of Acetyl-CoA carboxylase to form complexes that contain MID1IP1 and ACACA and/or ACACB. Interaction with THRSP interferes with ACACA binding.

It localises to the nucleus. It is found in the cytoplasm. The protein resides in the cytoskeleton. In terms of biological role, plays a role in the regulation of lipogenesis in liver. Up-regulates ACACA enzyme activity. Required for efficient lipid biosynthesis, including triacylglycerol, diacylglycerol and phospholipid. Involved in stabilization of microtubules. The sequence is that of Mid1-interacting protein 1 (MID1IP1) from Homo sapiens (Human).